The primary structure comprises 206 residues: Large ribosomal subunit protein mL62 (206 aa).

Residues 1 to 29 (MATAWCLPWTLRRAGAWLLTPPLRCPRRA) constitute a mitochondrion transit peptide.

This sequence belongs to the prokaryotic/mitochondrial release factor family. Mitochondrion-specific ribosomal protein mL62 subfamily. Component of the mitochondrial 39S ribosomal subunit.

Its subcellular location is the mitochondrion. The enzyme catalyses an N-acyl-L-alpha-aminoacyl-tRNA + H2O = an N-acyl-L-amino acid + a tRNA + H(+). In terms of biological role, essential peptidyl-tRNA hydrolase component of the mitochondrial large ribosomal subunit. Acts as a codon-independent translation release factor that has lost all stop codon specificity and directs the termination of translation in mitochondrion, possibly in case of abortive elongation. May be involved in the hydrolysis of peptidyl-tRNAs that have been prematurely terminated and thus in the recycling of stalled mitochondrial ribosomes. This chain is Large ribosomal subunit protein mL62, found in Ailuropoda melanoleuca (Giant panda).